Here is a 193-residue protein sequence, read N- to C-terminus: GTP cyclohydrolase 1 (193 aa).

Positions 83, 86, and 154 each coordinate Zn(2+).

The protein belongs to the GTP cyclohydrolase I family. As to quaternary structure, homomer.

It catalyses the reaction GTP + H2O = 7,8-dihydroneopterin 3'-triphosphate + formate + H(+). The protein operates within cofactor biosynthesis; 7,8-dihydroneopterin triphosphate biosynthesis; 7,8-dihydroneopterin triphosphate from GTP: step 1/1. This Porphyromonas gingivalis (strain ATCC 33277 / DSM 20709 / CIP 103683 / JCM 12257 / NCTC 11834 / 2561) protein is GTP cyclohydrolase 1.